The following is a 186-amino-acid chain: dCTP deaminase (186 aa).

107–112 (KSSYAR) is a binding site for dCTP. Glu133 serves as the catalytic Proton donor/acceptor. Positions 152, 166, and 176 each coordinate dCTP.

The protein belongs to the dCTP deaminase family. In terms of assembly, homotrimer.

It carries out the reaction dCTP + H2O + H(+) = dUTP + NH4(+). Its pathway is pyrimidine metabolism; dUMP biosynthesis; dUMP from dCTP (dUTP route): step 1/2. Functionally, catalyzes the deamination of dCTP to dUTP. In Chloroflexus aurantiacus (strain ATCC 29366 / DSM 635 / J-10-fl), this protein is dCTP deaminase.